The chain runs to 378 residues: Erythronate-4-phosphate dehydrogenase (378 aa).

The substrate site is built by serine 45 and threonine 66. Positions 146 and 175 each coordinate NAD(+). The active site involves arginine 208. NAD(+) is bound at residue aspartate 232. Glutamate 237 is a catalytic residue. The active-site Proton donor is the histidine 254. An NAD(+)-binding site is contributed by glycine 257. Tyrosine 258 contacts substrate.

This sequence belongs to the D-isomer specific 2-hydroxyacid dehydrogenase family. PdxB subfamily. In terms of assembly, homodimer.

The protein localises to the cytoplasm. The catalysed reaction is 4-phospho-D-erythronate + NAD(+) = (R)-3-hydroxy-2-oxo-4-phosphooxybutanoate + NADH + H(+). It functions in the pathway cofactor biosynthesis; pyridoxine 5'-phosphate biosynthesis; pyridoxine 5'-phosphate from D-erythrose 4-phosphate: step 2/5. Catalyzes the oxidation of erythronate-4-phosphate to 3-hydroxy-2-oxo-4-phosphonooxybutanoate. This Salmonella dublin (strain CT_02021853) protein is Erythronate-4-phosphate dehydrogenase.